Reading from the N-terminus, the 358-residue chain is Phosphoserine aminotransferase (358 aa).

Arg41 contributes to the L-glutamate binding site. Residues 75–76 (AR), Trp101, Thr150, Asp170, and Gln193 contribute to the pyridoxal 5'-phosphate site. An N6-(pyridoxal phosphate)lysine modification is found at Lys194. 235-236 (NT) provides a ligand contact to pyridoxal 5'-phosphate.

Belongs to the class-V pyridoxal-phosphate-dependent aminotransferase family. SerC subfamily. As to quaternary structure, homodimer. Requires pyridoxal 5'-phosphate as cofactor.

Its subcellular location is the cytoplasm. The catalysed reaction is O-phospho-L-serine + 2-oxoglutarate = 3-phosphooxypyruvate + L-glutamate. The enzyme catalyses 4-(phosphooxy)-L-threonine + 2-oxoglutarate = (R)-3-hydroxy-2-oxo-4-phosphooxybutanoate + L-glutamate. It functions in the pathway amino-acid biosynthesis; L-serine biosynthesis; L-serine from 3-phospho-D-glycerate: step 2/3. Its pathway is cofactor biosynthesis; pyridoxine 5'-phosphate biosynthesis; pyridoxine 5'-phosphate from D-erythrose 4-phosphate: step 3/5. Its function is as follows. Catalyzes the reversible conversion of 3-phosphohydroxypyruvate to phosphoserine and of 3-hydroxy-2-oxo-4-phosphonooxybutanoate to phosphohydroxythreonine. The sequence is that of Phosphoserine aminotransferase from Histophilus somni (strain 129Pt) (Haemophilus somnus).